An 80-amino-acid chain; its full sequence is Small ribosomal subunit protein uS17 (80 aa).

The protein belongs to the universal ribosomal protein uS17 family. As to quaternary structure, part of the 30S ribosomal subunit.

One of the primary rRNA binding proteins, it binds specifically to the 5'-end of 16S ribosomal RNA. This is Small ribosomal subunit protein uS17 from Cereibacter sphaeroides (strain ATCC 17029 / ATH 2.4.9) (Rhodobacter sphaeroides).